Here is a 194-residue protein sequence, read N- to C-terminus: Large ribosomal subunit protein bL9 (194 aa).

This sequence belongs to the bacterial ribosomal protein bL9 family.

Its function is as follows. Binds to the 23S rRNA. This is Large ribosomal subunit protein bL9 from Paracoccus denitrificans (strain Pd 1222).